Reading from the N-terminus, the 419-residue chain is uncharacterized protein (419 aa).

This sequence belongs to the MT-A70-like family.

It localises to the cytoplasm. This is an uncharacterized protein from Schizosaccharomyces pombe (strain 972 / ATCC 24843) (Fission yeast).